Here is a 119-residue protein sequence, read N- to C-terminus: Ribonuclease P protein component (119 aa).

It belongs to the RnpA family. Consists of a catalytic RNA component (M1 or rnpB) and a protein subunit.

It catalyses the reaction Endonucleolytic cleavage of RNA, removing 5'-extranucleotides from tRNA precursor.. Functionally, RNaseP catalyzes the removal of the 5'-leader sequence from pre-tRNA to produce the mature 5'-terminus. It can also cleave other RNA substrates such as 4.5S RNA. The protein component plays an auxiliary but essential role in vivo by binding to the 5'-leader sequence and broadening the substrate specificity of the ribozyme. The sequence is that of Ribonuclease P protein component from Pectobacterium atrosepticum (strain SCRI 1043 / ATCC BAA-672) (Erwinia carotovora subsp. atroseptica).